The primary structure comprises 765 residues: MLITSSLLPPSGTWIFNINSLFCSLSIKNALSNLPLMRFCNSSTTQHTSTLVISLFIISPENIIFFFRIFYYCDNMEREEFLKYLRQGKYDKLAKLINSYSDILSFLDELFTSNKKDDVRRALLVLKRLDNEVIERYLYYILLNLNEKRIIAKEAEEILKKITNKESVEEAILEIAKKPLDEKIVYLFLQNMKEGNIFFRAILEHTKSKNMEESIKILLKNYNSEMILKILANKLYSSEKDERELTINILLNIVDSLTDEQKNILRGHLSVSLLGDEDKKLYRKFKQLFEKLDIPAELSDEQIKSLLKSHGKTTLNIILRENIKLPANFYNREFLKDFLYTGDEEKQFVGVKLISLKKDSKKKVDLLFRFLNYGYGKAKTAAIRELKKIAQNNNELKKYIENKTLMYAKKMNLGLKISSLRILKEFAKKEHLEFLINEHKRLKELVYKLEEEKFMGGFRHLLMMEEEIRKCNVAMRLIEEIVAEICLKNDIHYNDLKISEKLGYEFYRTMELIGVKNLNLIDIHEFLEDVKRDGELITYLSGIVINNNKIDDNLAKKILEVTEKAEMEDKDVLNANKIMIYASLNRVDKIGEIINMAEGYYSKLAFINGVKKFIDEKLLDEEKINLLIPKIAEMIYSTKKLRLMALEFFKNYPNELVLPILINEIGNYRGEDKLMIDVISNVIFKYPNNIHSIRELLNTDKRNSALKILLKVSEKRPELLEDFIYLLAGMYSSANEEDKKLIKKILKNITTEEQKLILKPIIGDL.

This is an uncharacterized protein from Methanocaldococcus jannaschii (strain ATCC 43067 / DSM 2661 / JAL-1 / JCM 10045 / NBRC 100440) (Methanococcus jannaschii).